We begin with the raw amino-acid sequence, 285 residues long: Purine biosynthesis transcriptional repressor PurR (285 aa).

The tract at residues 1 to 73 is DNA binding domain; that stretch reads MKFRRSGRLV…GAAGGVKYIP (73 aa). The segment at 74–285 is effector binding domain; it reads KMKQAEAEEF…NLLKNGETES (212 aa). Y102 contributes to the guanosine 3',5'-bis(diphosphate) binding site. 5-phospho-alpha-D-ribose 1-diphosphate is bound by residues A138, T139, K140, and R160. Guanosine 3',5'-bis(diphosphate) contacts are provided by G178 and S179. Residues D203, D204, F205, K207, and A208 each coordinate 5-phospho-alpha-D-ribose 1-diphosphate. K207 is a guanosine 3',5'-bis(diphosphate) binding site. Residues G209, G210, and T211 each coordinate guanosine 3',5'-bis(diphosphate). T211 is a binding site for 5-phospho-alpha-D-ribose 1-diphosphate.

It belongs to the purine/pyrimidine phosphoribosyltransferase family. PurR subfamily. As to quaternary structure, homodimer.

With respect to regulation, the binding of PurR to DNA, and therefore the repressor activity, is influenced by interaction with the effector molecules 5-phosphoribosyl 1-pyrophosphate (PRPP) and (p)ppGpp. PRPP binds to PurR and reduces affinity of PurR for DNA, which inhibits the repressor activity and induces transcription of the target genes. On the contrary, (p)ppGpp enhances binding of PurR to DNA and repression of the transcription. PRPP and (p)ppGpp compete for PurR binding and allosteric control of transcription. ppGpp maintains PurR-DNA interaction and prevents PRPP from de-repressing PurR regulation during conditions that lead to (p)ppGpp induction, such as upon amino acid starvation. Its function is as follows. DNA-binding transcriptional repressor that controls the expression of a number of genes involved in the synthesis, metabolism and transport of purines. In response to a signal of excess adenine, represses the transcription of the pur operon, which encodes enzymes of the purine biosynthetic pathway. It also represses the expression of the purA and purR genes. In addition, controls the expression of several other genes or operons, which encode enzymes or transporters playing a role in purine nucleotide metabolism. Acts by binding directly to specific DNA sequences, named PurBoxes, in the upstream control regions of affected genes. Two PurBoxes are required for high-affinity PurR binding. Also responds to amino acid starvation via (p)ppGpp, which strongly increases PurR activity and repression of purine nucleotide biosynthesis genes. The polypeptide is Purine biosynthesis transcriptional repressor PurR (Bacillus subtilis (strain 168)).